A 316-amino-acid polypeptide reads, in one-letter code: SHC-transforming protein homolog 1 (316 aa).

Residues 16-158 (GVSLSATYLG…LIDVLTTAIN (143 aa)) enclose the PID domain. Positions 211–307 (WYHGNLSRED…ETSLNLIRPV (97 aa)) constitute an SH2 domain. Positions 292–316 (SEGRDRETSLNLIRPVPCPGSDDIE) are disordered.

As to quaternary structure, interacts (via PID domain) with daf-2 (via cytoplasmic domain). Interacts with mek-1; the interaction is independent of mek-1 catalytic activity and is constitutive. Interacts (via N-terminus) with mlk-1 (via NPQY motif when phosphorylated on tyrosine residue). Does not interact with jkk-1 or sek-1. Interacts (via SH2 domain) with svh-2. Interacts with svh-4. In terms of tissue distribution, expressed in hypodermis, intestine, head and tail neurons, pharynx, gonads, vulva and body muscles.

The protein resides in the cytoplasm. The protein localises to the nucleus. It localises to the cell membrane. Functionally, scaffold protein which plays an important role in the activation of the JNK pathway composed of mlk-1, mek-1 and kgb-1; by bringing together mek-1 and mlk-1, promotes mlk-1-mediated phosphorylation and activation of mek-1 which in turn phosphorylates kgb-1. In addition, negatively modulates the activation of the insulin/IGF-1-like signaling (IIS) probably by inhibiting the insulin receptor daf-2. Positively regulates the activity of the transcription factor daf-16/FOXO by both inhibiting IIS and activating the JNK pathway. Plays a role in maintaining gonadal basement membrane integrity through activation of the JNK pathway components mek-1 and jnk-1. Involved in the response to several environmental stresses including heavy metal ions (Cu(2+) and Cd(2+)), heat, oxidative and protein misfolding (ER) stresses. Plays a role in gonad and germline development following the L1 diapause. Plays a role in life span and egg laying. Plays a role in axon regeneration after injury. This chain is SHC-transforming protein homolog 1, found in Caenorhabditis elegans.